A 442-amino-acid polypeptide reads, in one-letter code: C4-dicarboxylate transport protein (442 aa).

Helical transmembrane passes span 10–30, 40–60, 77–97, 144–164, 183–203, 221–241, 331–351, and 354–374; these read VQVL…PSLG, FIKL…VSGI, LLYF…IVNI, FTQG…FALL, VIFV…FGAM, LMIT…GLIA, LLGV…SGFI, and AATL…ILGI. The disordered stretch occupies residues 418–442; it reads LPTIEPDVHSEERGEGRELDSLRPA. A compositionally biased stretch (basic and acidic residues) spans 423–442; that stretch reads PDVHSEERGEGRELDSLRPA.

This sequence belongs to the dicarboxylate/amino acid:cation symporter (DAACS) (TC 2.A.23) family.

The protein localises to the cell membrane. Functionally, responsible for the transport of dicarboxylates such as succinate, fumarate, and malate across the membrane. In Deinococcus deserti (strain DSM 17065 / CIP 109153 / LMG 22923 / VCD115), this protein is C4-dicarboxylate transport protein.